A 37-amino-acid chain; its full sequence is Cytochrome b6-f complex subunit 5 (37 aa).

The helical transmembrane segment at 5–25 (LLSGIVLGLIPITLFGLLVAA) threads the bilayer.

Belongs to the PetG family. As to quaternary structure, the 4 large subunits of the cytochrome b6-f complex are cytochrome b6, subunit IV (17 kDa polypeptide, PetD), cytochrome f and the Rieske protein, while the 4 small subunits are PetG, PetL, PetM and PetN. The complex functions as a dimer.

It is found in the plastid. Its subcellular location is the chloroplast thylakoid membrane. In terms of biological role, component of the cytochrome b6-f complex, which mediates electron transfer between photosystem II (PSII) and photosystem I (PSI), cyclic electron flow around PSI, and state transitions. PetG is required for either the stability or assembly of the cytochrome b6-f complex. The sequence is that of Cytochrome b6-f complex subunit 5 from Pyropia yezoensis (Susabi-nori).